A 421-amino-acid chain; its full sequence is Thymidine phosphorylase (421 aa).

The protein belongs to the thymidine/pyrimidine-nucleoside phosphorylase family. Homodimer.

The catalysed reaction is thymidine + phosphate = 2-deoxy-alpha-D-ribose 1-phosphate + thymine. Functionally, the enzymes which catalyze the reversible phosphorolysis of pyrimidine nucleosides are involved in the degradation of these compounds and in their utilization as carbon and energy sources, or in the rescue of pyrimidine bases for nucleotide synthesis. The polypeptide is Thymidine phosphorylase (deoA) (Mycoplasma genitalium (strain ATCC 33530 / DSM 19775 / NCTC 10195 / G37) (Mycoplasmoides genitalium)).